The sequence spans 246 residues: MLQNIRIVLVETSHTGNMGSVARAMKTMGLTNLWLVNPLVKPDSQAIALAAGASDVIGNAHIVDTLDEALAGCSLVVGTSARSRTLPWPILDPRECGLKSVAEAANTPVALVFGRERVGLTNEELQKCHYHVAIAANPEYSSLNLAMAVQVIAYEVRMAWLATQENGEQVEHEETPYPLVDDLERFYGHLEQTLLATGFIRENHPGQVMNKLRRLFTRARPESQELNILRGILASIEQQNKGNKAE.

Residues 79–81 (TSA), Gly-114, Ile-134, and 141–143 (SSL) contribute to the S-adenosyl-L-methionine site.

It belongs to the class IV-like SAM-binding methyltransferase superfamily. RNA methyltransferase TrmH family. Homodimer.

It localises to the cytoplasm. The enzyme catalyses cytidine(32) in tRNA + S-adenosyl-L-methionine = 2'-O-methylcytidine(32) in tRNA + S-adenosyl-L-homocysteine + H(+). The catalysed reaction is uridine(32) in tRNA + S-adenosyl-L-methionine = 2'-O-methyluridine(32) in tRNA + S-adenosyl-L-homocysteine + H(+). Its function is as follows. Catalyzes the formation of 2'O-methylated cytidine (Cm32) or 2'O-methylated uridine (Um32) at position 32 in tRNA. In Escherichia coli O6:K15:H31 (strain 536 / UPEC), this protein is tRNA (cytidine/uridine-2'-O-)-methyltransferase TrmJ (trmJ).